Consider the following 282-residue polypeptide: MKLIVISGRSGSGKTIALHVLEDLGYNCIDGVPFQLLAQLIDTVDPKNNKVAISLDIRNLPTDASQIQTLLSSLQQKVEVEIIYLDAISAELIRRYSETRRLHPLSKNKLSLSQALELENELLEPIHKRAALSIDTTTLSIHNLNERLKIHLQGSTKSNLLIIFQSFGFKNIHPDDADYIFDVRFLPNPHWEPTLQKYTGKDQPVKAFLNGHLVVKQTINQIENLFHSWLPYLEENNRNYVTIAIGCTGGKHRSVYVAEQLAAQFKQKYQVQIEHKGLKDQL.

An ATP-binding site is contributed by 8–15 (GRSGSGKT). Position 56 to 59 (56 to 59 (DIRN)) interacts with GTP.

This sequence belongs to the RapZ-like family.

Displays ATPase and GTPase activities. In Psychromonas ingrahamii (strain DSM 17664 / CCUG 51855 / 37), this protein is Nucleotide-binding protein Ping_2894.